Consider the following 144-residue polypeptide: Large ribosomal subunit protein uL16 (144 aa).

Positions 1–14 are enriched in basic residues; the sequence is MLMPKRVKYRKPHR. The segment at 1 to 25 is disordered; it reads MLMPKRVKYRKPHRPGTQGKATRGN.

This sequence belongs to the universal ribosomal protein uL16 family. Part of the 50S ribosomal subunit.

In terms of biological role, binds 23S rRNA and is also seen to make contacts with the A and possibly P site tRNAs. The polypeptide is Large ribosomal subunit protein uL16 (Moorella thermoacetica (strain ATCC 39073 / JCM 9320)).